A 218-amino-acid polypeptide reads, in one-letter code: Probable transaldolase (218 aa).

The active-site Schiff-base intermediate with substrate is the lysine 87.

Belongs to the transaldolase family. Type 3B subfamily.

The protein resides in the cytoplasm. It catalyses the reaction D-sedoheptulose 7-phosphate + D-glyceraldehyde 3-phosphate = D-erythrose 4-phosphate + beta-D-fructose 6-phosphate. It participates in carbohydrate degradation; pentose phosphate pathway; D-glyceraldehyde 3-phosphate and beta-D-fructose 6-phosphate from D-ribose 5-phosphate and D-xylulose 5-phosphate (non-oxidative stage): step 2/3. Functionally, transaldolase is important for the balance of metabolites in the pentose-phosphate pathway. This is Probable transaldolase from Flavobacterium psychrophilum (strain ATCC 49511 / DSM 21280 / CIP 103535 / JIP02/86).